Consider the following 415-residue polypeptide: MSNLENFDKEIFDLTNKELQRQCDYLEMIASENFTYPEVMEVMGSILTNKYAEGYPGKRYYGGCEFVDEIEQTAIDRCKKLFGCNFANVQPNSGSQANQGVYGAFIKPGDKILGMDLSNGGHLTHGAKVNASGKFYSSFFYGVEMDGRIDYNRVADIAKIVKPKLIVCGASAYPREIDFAKFREIADSVGAFLFADVAHIAGLVVAGEHTNPFPYCHVVSSTTHKTLRGPRGGIIMTNEEEFAKKINSSIFPGMQGGPLVHVIAGKAVGFKHNLSPEWKTYAKQVKANCKILGDTLMKRGFDLVSGGTDNHLILVSFLKKDYSGKDASNALENAGITVNKNTVPGETRSPFVTSGIRVGSAALTSRGMKEKEFEWIANKIADVLNDINNTSLQSKIKAEVKELASKFIIYDKAMF.

(6S)-5,6,7,8-tetrahydrofolate-binding positions include leucine 117 and 121–123 (GHL). Lysine 225 is subject to N6-(pyridoxal phosphate)lysine. Residues glutamate 241 and 349–351 (SPF) contribute to the (6S)-5,6,7,8-tetrahydrofolate site.

Belongs to the SHMT family. Homodimer. It depends on pyridoxal 5'-phosphate as a cofactor.

It is found in the cytoplasm. It catalyses the reaction (6R)-5,10-methylene-5,6,7,8-tetrahydrofolate + glycine + H2O = (6S)-5,6,7,8-tetrahydrofolate + L-serine. The protein operates within one-carbon metabolism; tetrahydrofolate interconversion. It participates in amino-acid biosynthesis; glycine biosynthesis; glycine from L-serine: step 1/1. Its function is as follows. Catalyzes the reversible interconversion of serine and glycine with tetrahydrofolate (THF) serving as the one-carbon carrier. This reaction serves as the major source of one-carbon groups required for the biosynthesis of purines, thymidylate, methionine, and other important biomolecules. Also exhibits THF-independent aldolase activity toward beta-hydroxyamino acids, producing glycine and aldehydes, via a retro-aldol mechanism. The protein is Serine hydroxymethyltransferase of Campylobacter hominis (strain ATCC BAA-381 / DSM 21671 / CCUG 45161 / LMG 19568 / NCTC 13146 / CH001A).